The chain runs to 419 residues: N-acylneuraminate cytidylyltransferase (419 aa).

Belongs to the CMP-NeuNAc synthase family. Monomer. May form aggregates. The cofactor is Mg(2+). Mn(2+) serves as cofactor.

Its subcellular location is the cytoplasm. It catalyses the reaction an N-acylneuraminate + CTP = a CMP-N-acyl-beta-neuraminate + diphosphate. With respect to regulation, inhibited by the CTP analogs 5-mercuri-CTP and CTP-2',3'-dialdehyde. In terms of biological role, catalyzes the formation of CMP-N-acetylneuraminic acid (CMP-NeuNAc), which is essential for the formation of the capsule. The sequence is that of N-acylneuraminate cytidylyltransferase (neuA) from Escherichia coli O18:K1:H7 (strain RS218 / NMEC).